Here is a 324-residue protein sequence, read N- to C-terminus: Probable pectinesterase A (324 aa).

An N-terminal signal peptide occupies residues 1–19 (MHGSLLKLALLSFSLGSSA). Glutamine 142 provides a ligand contact to substrate. The active-site Proton donor is the aspartate 165. The active-site Nucleophile is the aspartate 186. Residues arginine 246 and tryptophan 248 each contribute to the substrate site. The N-linked (GlcNAc...) asparagine glycan is linked to asparagine 285.

Belongs to the pectinesterase family.

The protein resides in the secreted. It carries out the reaction [(1-&gt;4)-alpha-D-galacturonosyl methyl ester](n) + n H2O = [(1-&gt;4)-alpha-D-galacturonosyl](n) + n methanol + n H(+). It functions in the pathway glycan metabolism; pectin degradation; 2-dehydro-3-deoxy-D-gluconate from pectin: step 1/5. In terms of biological role, involved in maceration and soft-rotting of plant tissue. The chain is Probable pectinesterase A (pmeA) from Aspergillus oryzae (strain ATCC 42149 / RIB 40) (Yellow koji mold).